We begin with the raw amino-acid sequence, 145 residues long: Transcription antitermination protein NusB (145 aa).

The protein belongs to the NusB family.

Involved in transcription antitermination. Required for transcription of ribosomal RNA (rRNA) genes. Binds specifically to the boxA antiterminator sequence of the ribosomal RNA (rrn) operons. This is Transcription antitermination protein NusB from Acetivibrio thermocellus (strain ATCC 27405 / DSM 1237 / JCM 9322 / NBRC 103400 / NCIMB 10682 / NRRL B-4536 / VPI 7372) (Clostridium thermocellum).